A 660-amino-acid polypeptide reads, in one-letter code: T-box protein H15 (660 aa).

The segment covering 1–11 (MLLSNQPANTK) has biased composition (polar residues). Disordered regions lie at residues 1–72 (MLLS…NHNQ), 90–122 (GGNA…DDVD), and 169–266 (QQQQ…PKIV). The segment covering 12–22 (PQQTPSPSQTQ) has biased composition (low complexity). The span at 23 to 33 (NFKSKLQQQIV) shows a compositional bias: polar residues. A compositionally biased stretch (low complexity) spans 35 to 47 (AAAAAAANIANGS). Positions 48–71 (SHHHHHQNHHHHHPLNNHHNHNHN) are enriched in basic residues. 2 stretches are compositionally biased toward low complexity: residues 93 to 108 (APSS…SPAS) and 169 to 179 (QQQQQQQQQRQ). Over residues 180–198 (QTHHHATTGKQQRQHHNHH) the composition is skewed to basic residues. The segment covering 199–233 (SSNTNNSSNSGNSNTNSKSSSQRGRSAAAVGAAAT) has biased composition (low complexity). Residues 234-243 (PSPPPPPPSQ) show a composition bias toward pro residues. Residues 286–472 (LWDKFHELGT…SNPFAKGFRD (187 aa)) constitute a DNA-binding region (T-box). A disordered region spans residues 598–660 (NRTPPPSMAV…PPASNRAESP (63 aa)). Residues 600–613 (TPPPSMAVAPPAPA) show a composition bias toward pro residues. A compositionally biased stretch (low complexity) spans 614 to 624 (TPTSSCGSASP). Polar residues predominate over residues 643-660 (QVPQHQASPPASNRAESP).

Its subcellular location is the nucleus. In Drosophila melanogaster (Fruit fly), this protein is T-box protein H15 (H15).